The primary structure comprises 484 residues: Transcription factor TGAL4 (484 aa).

The segment covering 1-11 (MGEASSSSGHP) has biased composition (polar residues). 3 disordered regions span residues 1 to 22 (MGEASSSSGHPRQNPHVLGYGF), 84 to 137 (ATAA…NASS), and 155 to 181 (QQEQHKKMATNSPTHSSKTGKALDPKT). Over residues 123–137 (SESSSKNNSNQNASS) the composition is skewed to low complexity. Over residues 163 to 173 (ATNSPTHSSKT) the composition is skewed to polar residues. The bZIP domain occupies 178-222 (DPKTMRRLAQNREAARKSRLRKKAYIQQLESSKLKLAQMEQDIHR). The tract at residues 180–200 (KTMRRLAQNREAARKSRLRKK) is basic motif. The segment at 206–220 (LESSKLKLAQMEQDI) is leucine-zipper. Residues 241 to 455 (AAMFDVDYAR…RALSSLWASR (215 aa)) enclose the DOG1 domain.

It belongs to the bZIP family. Interacts with NPR1/NH1 and NPR3/NH3.

The protein localises to the nucleus. In terms of biological role, transcriptional regulator involved in defense response. The protein is Transcription factor TGAL4 of Oryza sativa subsp. japonica (Rice).